Here is a 292-residue protein sequence, read N- to C-terminus: Cyclin-dependent kinase 5 (292 aa).

The 283-residue stretch at Tyr4–Phe286 folds into the Protein kinase domain. Residues Ile10 to Val18 and Lys33 each bind ATP. Tyr15 bears the Phosphotyrosine; by ABL1, EPHA4 and FYN mark. Thr17 is modified (phosphothreonine). An N6-acetyllysine modification is found at Lys56. Ser72 is subject to Phosphoserine. Asp126 serves as the catalytic Proton acceptor. A Phosphoserine modification is found at Ser159.

This sequence belongs to the protein kinase superfamily. CMGC Ser/Thr protein kinase family. CDC2/CDKX subfamily. As to quaternary structure, heterodimer composed of a catalytic subunit CDK5 and a regulatory subunit CDK5R1 (p25) and macromolecular complex composed of at least CDK5, CDK5R1 (p35) and CDK5RAP1 or CDK5RAP2 or CDK5RAP3. Only the heterodimer shows kinase activity. Under neurotoxic stress and neuronal injury conditions, p35 is cleaved by calpain to generate p25 that hyperactivates CDK5, that becomes functionally disabled and often toxic. Found in a trimolecular complex with CABLES1 and ABL1. Interacts with CABLES1 and CABLES2. Interacts with AATK and GSTP1. Binds to HDAC1 when in complex with p25. Interaction with myristoylation p35 promotes CDK5 association with membranes. Both isoforms 1 and 2 interacts with beta-catenin/CTNNB1. Interacts with delta-catenin/CTNND2 and APEX1. Interacts with P53/TP53 in neurons. Interacts with EPHA4; may mediate the activation of NGEF by EPHA4. Interacts with PTK2/FAK1. The complex p35/CDK5 interacts with CLOCK. Interacts with HTR6. Post-translationally, phosphorylation on Tyr-15 by ABL1 and FYN, and on Ser-159 by casein kinase 1 promotes kinase activity. By contrast, phosphorylation at Thr-14 inhibits activity. Phosphorylation at Ser-159 is essential for maximal catalytic activity. As to expression, ubiquitously expressed. Accumulates in cortical neurons (at protein level). In terms of tissue distribution, expressed in the testis, skeletal muscle, colon, bone marrow and ovary.

It is found in the cytoplasm. The protein resides in the nucleus. Its subcellular location is the cell membrane. It localises to the perikaryon. The protein localises to the cell projection. It is found in the lamellipodium. The protein resides in the growth cone. Its subcellular location is the postsynaptic density. It localises to the synapse. It catalyses the reaction L-seryl-[protein] + ATP = O-phospho-L-seryl-[protein] + ADP + H(+). The catalysed reaction is L-threonyl-[protein] + ATP = O-phospho-L-threonyl-[protein] + ADP + H(+). With respect to regulation, inhibited by 2-(1-ethyl-2-hydroxyethylamino)-6-benzylamino-9-isopropylpurine (roscovitine), 1-isopropyl-4-aminobenzyl-6-ether-linked benzimidazoles, resveratrol, AT-7519 and olomoucine. Activated by CDK5R1 (p35) and CDK5R2 (p39) during the development of the nervous system; degradation of CDK5R1 (p35) and CDK5R2 (p39) by proteasome result in down regulation of kinase activity, during this process, CDK5 phosphorylates p35 and induces its ubiquitination and subsequent degradation. Kinase activity is mainly determined by the amount of p35 available and subcellular location; reversible association to plasma membrane inhibits activity. Long-term inactivation as well as CDK5R1 (p25)-mediated hyperactivation of CDK5 triggers cell death. The pro-death activity of hyperactivated CDK5 is suppressed by membrane association of CDK5, via myristoylation of p35. Brain-derived neurotrophic factor, glial-derived neurotrophic factor, nerve growth factor (NGF), retinoic acid, laminin and neuregulin promote activity. Neurotoxicity enhances nuclear activity, thus leading to MEF2 phosphorylation and inhibition prior to apoptosis of cortical neurons. Repression by GSTP1 via p25/p35 translocation prevents neurodegeneration. Functionally, proline-directed serine/threonine-protein kinase essential for neuronal cell cycle arrest and differentiation and may be involved in apoptotic cell death in neuronal diseases by triggering abortive cell cycle re-entry. Interacts with D1 and D3-type G1 cyclins. Phosphorylates SRC, NOS3, VIM/vimentin, p35/CDK5R1, MEF2A, SIPA1L1, SH3GLB1, PXN, PAK1, MCAM/MUC18, SEPT5, SYN1, DNM1, AMPH, SYNJ1, CDK16, RAC1, RHOA, CDC42, TONEBP/NFAT5, MAPT/TAU, MAP1B, histone H1, p53/TP53, HDAC1, APEX1, PTK2/FAK1, huntingtin/HTT, ATM, MAP2, NEFH and NEFM. Regulates several neuronal development and physiological processes including neuronal survival, migration and differentiation, axonal and neurite growth, synaptogenesis, oligodendrocyte differentiation, synaptic plasticity and neurotransmission, by phosphorylating key proteins. Negatively regulates the CACNA1B/CAV2.2 -mediated Ca(2+) release probability at hippocampal neuronal soma and synaptic terminals. Activated by interaction with CDK5R1 (p35) and CDK5R2 (p39), especially in postmitotic neurons, and promotes CDK5R1 (p35) expression in an autostimulation loop. Phosphorylates many downstream substrates such as Rho and Ras family small GTPases (e.g. PAK1, RAC1, RHOA, CDC42) or microtubule-binding proteins (e.g. MAPT/TAU, MAP2, MAP1B), and modulates actin dynamics to regulate neurite growth and/or spine morphogenesis. Also phosphorylates exocytosis associated proteins such as MCAM/MUC18, SEPT5, SYN1, and CDK16/PCTAIRE1 as well as endocytosis associated proteins such as DNM1, AMPH and SYNJ1 at synaptic terminals. In the mature central nervous system (CNS), regulates neurotransmitter movements by phosphorylating substrates associated with neurotransmitter release and synapse plasticity; synaptic vesicle exocytosis, vesicles fusion with the presynaptic membrane, and endocytosis. Promotes cell survival by activating anti-apoptotic proteins BCL2 and STAT3, and negatively regulating of JNK3/MAPK10 activity. Phosphorylation of p53/TP53 in response to genotoxic and oxidative stresses enhances its stabilization by preventing ubiquitin ligase-mediated proteasomal degradation, and induces transactivation of p53/TP53 target genes, thus regulating apoptosis. Phosphorylation of p35/CDK5R1 enhances its stabilization by preventing calpain-mediated proteolysis producing p25/CDK5R1 and avoiding ubiquitin ligase-mediated proteasomal degradation. During aberrant cell-cycle activity and DNA damage, p25/CDK5 activity elicits cell-cycle activity and double-strand DNA breaks that precedes neuronal death by deregulating HDAC1. DNA damage triggered phosphorylation of huntingtin/HTT in nuclei of neurons protects neurons against polyglutamine expansion as well as DNA damage mediated toxicity. Phosphorylation of PXN reduces its interaction with PTK2/FAK1 in matrix-cell focal adhesions (MCFA) during oligodendrocytes (OLs) differentiation. Negative regulator of Wnt/beta-catenin signaling pathway. Activator of the GAIT (IFN-gamma-activated inhibitor of translation) pathway, which suppresses expression of a post-transcriptional regulon of proinflammatory genes in myeloid cells; phosphorylates the linker domain of glutamyl-prolyl tRNA synthetase (EPRS) in a IFN-gamma-dependent manner, the initial event in assembly of the GAIT complex. Phosphorylation of SH3GLB1 is required for autophagy induction in starved neurons. Phosphorylation of TONEBP/NFAT5 in response to osmotic stress mediates its rapid nuclear localization. MEF2 is inactivated by phosphorylation in nucleus in response to neurotoxin, thus leading to neuronal apoptosis. APEX1 AP-endodeoxyribonuclease is repressed by phosphorylation, resulting in accumulation of DNA damage and contributing to neuronal death. NOS3 phosphorylation down regulates NOS3-derived nitrite (NO) levels. SRC phosphorylation mediates its ubiquitin-dependent degradation and thus leads to cytoskeletal reorganization. May regulate endothelial cell migration and angiogenesis via the modulation of lamellipodia formation. Involved in dendritic spine morphogenesis by mediating the EFNA1-EPHA4 signaling. The complex p35/CDK5 participates in the regulation of the circadian clock by modulating the function of CLOCK protein: phosphorylates CLOCK at 'Thr-451' and 'Thr-461' and regulates the transcriptional activity of the CLOCK-BMAL1 heterodimer in association with altered stability and subcellular distribution. This chain is Cyclin-dependent kinase 5, found in Homo sapiens (Human).